Reading from the N-terminus, the 1046-residue chain is Toluene efflux pump membrane transporter TtgE (1046 aa).

Helical transmembrane passes span 10–30 (IFAW…LTKM), 339–359 (SVVH…FLFL), 370–390 (LAVP…GISI), 392–412 (VLTM…AIVV), 440–460 (GALV…AFFG), 470–490 (FAVT…IFTP), 542–562 (LIFA…PKAF), 871–891 (APML…ALYE), 895–915 (VPMS…LATL), 927–947 (VGLM…IEFA), 973–993 (IIMT…ATGA), and 1008–1028 (GMIT…VVVV).

This sequence belongs to the resistance-nodulation-cell division (RND) (TC 2.A.6) family.

It localises to the cell inner membrane. Functionally, the inner membrane transporter component of an inducible organic solvent efflux pump. Involved in export of toluene and styrene but not of m-xylene, propylbenzene or ethylbenzene. Is not involved in antibiotic or AMP efflux. In Pseudomonas putida (strain DOT-T1E), this protein is Toluene efflux pump membrane transporter TtgE (ttgE).